Here is an 882-residue protein sequence, read N- to C-terminus: Putative HTH-type transcriptional regulator Mb0914c (882 aa).

The HTH luxR-type domain maps to 814 to 879; sequence PARGWGSLTP…QLVDEAARRG (66 aa). The segment at residues 838–857 is a DNA-binding region (H-T-H motif); it reads NKDIAKRLFVSPRTVQTHLT.

The polypeptide is Putative HTH-type transcriptional regulator Mb0914c (Mycobacterium bovis (strain ATCC BAA-935 / AF2122/97)).